Here is an 840-residue protein sequence, read N- to C-terminus: MSKYEFIKIEKKWQEFWDNNKTYKVKEDPNIPKEKRLYILDMFPYPSANGLHVGHPEGYTATDIFGRYKLLNGFHVLHPIGFDSFGLPAENYAIQTGTHPQKSTEENINKFKKQIKALGFAYDWDREIRTHDENYYKWTQWIFLELYKKGLAYAKEMPVWYCPELGTVLANEEIIQTPDGPKSERGFHNVEKKYLRQWVLKITKYAERLLNDLEELEWPESVKEMQRNWIGKSTGVEIDFEIEGHNDKIKVFTTRPDTIFGITYLVIAPESKLIEKITKNNFKRNVLKYVKHEELKSDLKRTSLEKDKSGVFTGSYAFHPITNEKIPIWIGSYVLGTYGSGAVMGVPAHDERDFQFAKKYKLKILPVISKSGKNEILEKAFIDDGISINSPNEFNNLKNSEVKDKVIEWLIKNKKGKEKVTYKLRDWIFSRQRYWGEPIPILFDKLGNAVPLEKNDLPLKLPKTANYKPSRTGESPLSRIKDWVNLKDTGFTRETNTMPQWAGSCWYYLRYLDPKNPKEFASKKKIEYWMPVDLYIGGAEHTVLHLLYSRFWHKVLYDLGYVNTKEPFKKLINQGIITAFSYQKENGILIPNDQVIEKNSKFFDKRDNKEVIQVIAKMSKSLKNVINPDDIIKEFGADSIRIYEMFMGPLTDSKPWNTKGIIGVFRFLNKIWNLREKELSKDNPPKEIISQLHKAIKKVTEDTEKLSFNTAISAMMIFVNELIKYEKNYLNIFKPFIIILSPYAPHLAEELWEYIGETPSLFKNSKWPEFDENLIIKDAKEIVLQINGKMKDKILLSKETDEEELKEIAMGNSKIKANLLNKKIVKIIAIKNKLVNIVIK.

A 'HIGH' region motif is present at residues 44–55 (PYPSANGLHVGH). A 'KMSKS' region motif is present at residues 617 to 621 (KMSKS). Lys620 serves as a coordination point for ATP.

It belongs to the class-I aminoacyl-tRNA synthetase family.

The protein localises to the cytoplasm. It carries out the reaction tRNA(Leu) + L-leucine + ATP = L-leucyl-tRNA(Leu) + AMP + diphosphate. This is Leucine--tRNA ligase from Borrelia garinii subsp. bavariensis (strain ATCC BAA-2496 / DSM 23469 / PBi) (Borreliella bavariensis).